A 205-amino-acid chain; its full sequence is ATP-dependent Clp protease proteolytic subunit (205 aa).

Residue Ser-108 is the Nucleophile of the active site. Residue His-133 is part of the active site.

The protein belongs to the peptidase S14 family. Fourteen ClpP subunits assemble into 2 heptameric rings which stack back to back to give a disk-like structure with a central cavity, resembling the structure of eukaryotic proteasomes.

The protein resides in the cytoplasm. It carries out the reaction Hydrolysis of proteins to small peptides in the presence of ATP and magnesium. alpha-casein is the usual test substrate. In the absence of ATP, only oligopeptides shorter than five residues are hydrolyzed (such as succinyl-Leu-Tyr-|-NHMec, and Leu-Tyr-Leu-|-Tyr-Trp, in which cleavage of the -Tyr-|-Leu- and -Tyr-|-Trp bonds also occurs).. Cleaves peptides in various proteins in a process that requires ATP hydrolysis. Has a chymotrypsin-like activity. Plays a major role in the degradation of misfolded proteins. The chain is ATP-dependent Clp protease proteolytic subunit from Alcanivorax borkumensis (strain ATCC 700651 / DSM 11573 / NCIMB 13689 / SK2).